Reading from the N-terminus, the 107-residue chain is UPF0145 protein LVIS_1527 (107 aa).

This sequence belongs to the UPF0145 family.

The chain is UPF0145 protein LVIS_1527 from Levilactobacillus brevis (strain ATCC 367 / BCRC 12310 / CIP 105137 / JCM 1170 / LMG 11437 / NCIMB 947 / NCTC 947) (Lactobacillus brevis).